We begin with the raw amino-acid sequence, 164 residues long: UPF0304 protein KPK_1463 (164 aa).

The protein belongs to the UPF0304 family.

The sequence is that of UPF0304 protein KPK_1463 from Klebsiella pneumoniae (strain 342).